Consider the following 262-residue polypeptide: Zinc finger protein 138 (262 aa).

The C2H2-type 1 zinc-finger motif lies at 110-132 (FRCKECDKSLCMLSRLTQHKKIH). Residues 138 to 160 (YKCEECGKTFNWSTNLSKPKKIH) form a C2H2-type 2; degenerate zinc finger. The C2H2-type 3; degenerate zinc-finger motif lies at 166–188 (YKCEVCGKAFHQSSILTKHKIIR). Residues 194–216 (YKCAHCGKAFKQSSHLTRHKIIH) form a C2H2-type 4 zinc finger. Residues 222–244 (YKCEQCGKVFKQSPTLTKHQIIY) form a C2H2-type 5; degenerate zinc finger. The C2H2-type 6; degenerate zinc-finger motif lies at 250-262 (YKCEECGKAFNLS).

This sequence belongs to the krueppel C2H2-type zinc-finger protein family.

Its subcellular location is the nucleus. In terms of biological role, may be involved in transcriptional regulation as a repressor. This Homo sapiens (Human) protein is Zinc finger protein 138 (ZNF138).